Consider the following 273-residue polypeptide: tRNA pseudouridine synthase B (273 aa).

The active-site Nucleophile is the Asp38.

It belongs to the pseudouridine synthase TruB family. Type 1 subfamily.

It carries out the reaction uridine(55) in tRNA = pseudouridine(55) in tRNA. Functionally, responsible for synthesis of pseudouridine from uracil-55 in the psi GC loop of transfer RNAs. The chain is tRNA pseudouridine synthase B from Campylobacter concisus (strain 13826).